A 393-amino-acid chain; its full sequence is Chorismate synthase (393 aa).

Positions 40 and 46 each coordinate NADP(+). Residues 129 to 131, 249 to 250, Gly301, 316 to 320, and Arg342 each bind FMN; these read RSS, QA, and KPIPT.

Belongs to the chorismate synthase family. As to quaternary structure, homotetramer. Requires FMNH2 as cofactor.

The enzyme catalyses 5-O-(1-carboxyvinyl)-3-phosphoshikimate = chorismate + phosphate. It participates in metabolic intermediate biosynthesis; chorismate biosynthesis; chorismate from D-erythrose 4-phosphate and phosphoenolpyruvate: step 7/7. In terms of biological role, catalyzes the anti-1,4-elimination of the C-3 phosphate and the C-6 proR hydrogen from 5-enolpyruvylshikimate-3-phosphate (EPSP) to yield chorismate, which is the branch point compound that serves as the starting substrate for the three terminal pathways of aromatic amino acid biosynthesis. This reaction introduces a second double bond into the aromatic ring system. This Geobacter sulfurreducens (strain ATCC 51573 / DSM 12127 / PCA) protein is Chorismate synthase.